The sequence spans 1023 residues: Rho GTPase-activating protein 11A (1023 aa).

Residues V49–G239 enclose the Rho-GAP domain. S285 carries the phosphoserine modification. T306 is modified (phosphothreonine). Phosphoserine is present on residues S316 and S318. T323 carries the post-translational modification Phosphothreonine. 3 positions are modified to phosphoserine: S339, S340, and S484. T508 carries the post-translational modification Phosphothreonine. Positions T567–N589 are disordered. Residues S582, S585, S638, and S675 each carry the phosphoserine modification. Residues K714 to N734 are disordered. A compositionally biased stretch (basic and acidic residues) spans E721–N734. At S847 the chain carries Phosphoserine. T866 is subject to Phosphothreonine. S868 bears the Phosphoserine mark. The disordered stretch occupies residues A999–L1023.

The protein localises to the nucleus. Its function is as follows. GTPase activator for the Rho-type GTPases by converting them to an inactive GDP-bound state. The protein is Rho GTPase-activating protein 11A of Homo sapiens (Human).